The chain runs to 4545 residues: MLTPPLLLLLPLLSALVSGATMDAPKTCSPKQFACRDQITCISKGWRCDGERDCPDGSDEAPEICPQSKAQRCPPNEHSCLGTELCVPMSRLCNGIQDCMDGSDEGAHCRELRANCSRMGCQHHCVPTPSGPTCYCNSSFQLQADGKTCKDFDECSVYGTCSQLCTNTDGSFTCGCVEGYLLQPDNRSCKAKNEPVDRPPVLLIANSQNILATYLSGAQVSTITPTSTRQTTAMDFSYANETVCWVHVGDSAAQTQLKCARMPGLKGFVDEHTINISLSLHHVEQMAIDWLTGNFYFVDDIDDRIFVCNRNGDTCVTLLDLELYNPKGIALDPAMGKVFFTDYGQIPKVERCDMDGQNRTKLVDSKIVFPHGITLDLVSRLVYWADAYLDYIEVVDYEGKGRQTIIQGILIEHLYGLTVFENYLYATNSDNANTQQKTSVIRVNRFNSTEYQVVTRVDKGGALHIYHQRRQPRVRSHACENDQYGKPGGCSDICLLANSHKARTCRCRSGFSLGSDGKSCKKPEHELFLVYGKGRPGIIRGMDMGAKVPDEHMIPIENLMNPRALDFHAETGFIYFADTTSYLIGRQKIDGTERETILKDGIHNVEGVAVDWMGDNLYWTDDGPKKTISVARLEKAAQTRKTLIEGKMTHPRAIVVDPLNGWMYWTDWEEDPKDSRRGRLERAWMDGSHRDIFVTSKTVLWPNGLSLDIPAGRLYWVDAFYDRIETILLNGTDRKIVYEGPELNHAFGLCHHGNYLFWTEYRSGSVYRLERGVAGAPPTVTLLRSERPPIFEIRMYDAQQQQVGTNKCRVNNGGCSSLCLATPGSRQCACAEDQVLDTDGVTCLANPSYVPPPQCQPGEFACANNRCIQERWKCDGDNDCLDNSDEAPALCHQHTCPSDRFKCENNRCIPNRWLCDGDNDCGNSEDESNATCSARTCPPNQFSCASGRCIPISWTCDLDDDCGDRSDESASCAYPTCFPLTQFTCNNGRCININWRCDNDNDCGDNSDEAGCSHSCSSTQFKCNSGRCIPEHWTCDGDNDCGDYSDETHANCTNQATRPPGGCHSDEFQCRLDGLCIPLRWRCDGDTDCMDSSDEKSCEGVTHVCDPNVKFGCKDSARCISKAWVCDGDSDCEDNSDEENCEALACRPPSHPCANNTSVCLPPDKLCDGKDDCGDGSDEGELCDQCSLNNGGCSHNCSVAPGEGIVCSCPLGMELGSDNHTCQIQSYCAKHLKCSQKCDQNKFSVKCSCYEGWVLEPDGESCRSLDPFKPFIIFSNRHEIRRIDLHKGDYSVLVPGLRNTIALDFHLSQSALYWTDVVEDKIYRGKLLDNGALTSFEVVIQYGLATPEGLAVDWIAGNIYWVESNLDQIEVAKLDGTLRTTLLAGDIEHPRAIALDPRDGILFWTDWDASLPRIEAASMSGAGRRTIHRETGSGGWPNGLTVDYLEKRILWIDARSDAIYSARYDGSGHMEVLRGHEFLSHPFAVTLYGGEVYWTDWRTNTLAKANKWTGHNVTVVQRTNTQPFDLQVYHPSRQPMAPNPCEANGGRGPCSHLCLINYNRTVSCACPHLMKLHKDNTTCYEFKKFLLYARQMEIRGVDLDAPYYNYIISFTVPDIDNVTVLDYDAREQRVYWSDVRTQAIKRAFINGTGVETVVSADLPNAHGLAVDWVSRNLFWTSYDTNKKQINVARLDGSFKNAVVQGLEQPHGLVVHPLRGKLYWTDGDNISMANMDGSNHTLLFSGQKGPVGLAIDFPESKLYWISSGNHTINRCNLDGSELEVIDTMRSQLGKATALAIMGDKLWWADQVSEKMGTCNKADGSGSVVLRNSTTLVMHMKVYDESIQLEHEGTNPCSVNNGDCSQLCLPTSETTRSCMCTAGYSLRSGQQACEGVGSFLLYSVHEGIRGIPLDPNDKSDALVPVSGTSLAVGIDFHAENDTIYWVDMGLSTISRAKRDQTWREDVVTNGIGRVEGIAVDWIAGNIYWTDQGFDVIEVARLNGSFRYVVISQGLDKPRAITVHPEKGYLFWTEWGHYPRIERSRLDGTERVVLVNVSISWPNGISVDYQGGKLYWCDARMDKIERIDLETGENREVVLSSNNMDMFSVSVFEDFIYWSDRTHANGSIKRGCKDNATDSVPLRTGIGVQLKDIKVFNRDRQKGTNVCAVANGGCQQLCLYRGGGQRACACAHGMLAEDGASCREYAGYLLYSERTILKSIHLSDERNLNAPVQPFEDPEHMKNVIALAFDYRAGTSPGTPNRIFFSDIHFGNIQQINDDGSGRTTIVENVGSVEGLAYHRGWDTLYWTSYTTSTITRHTVDQTRPGAFERETVITMSGDDHPRAFVLDECQNLMFWTNWNELHPSIMRAALSGANVLTLIEKDIRTPNGLAIDHRAEKLYFSDATLDKIERCEYDGSHRYVILKSEPVHPFGLAVYGEHIFWTDWVRRAVQRANKYVGSDMKLLRVDIPQQPMGIIAVANDTNSCELSPCRINNGGCQDLCLLTHQGHVNCSCRGGRILQEDFTCRAVNSSCRAQDEFECANGECISFSLTCDGVSHCKDKSDEKPSYCNSRRCKKTFRQCNNGRCVSNMLWCNGVDDCGDGSDEIPCNKTACGVGEFRCRDGSCIGNSSRCNQFVDCEDASDEMNCSATDCSSYFRLGVKGVLFQPCERTSLCYAPSWVCDGANDCGDYSDERDCPGVKRPRCPLNYFACPSGRCIPMSWTCDKEDDCENGEDETHCNKFCSEAQFECQNHRCISKQWLCDGSDDCGDGSDEAAHCEGKTCGPSSFSCPGTHVCVPERWLCDGDKDCTDGADESVTAGCLYNSTCDDREFMCQNRLCIPKHFVCDHDRDCADGSDESPECEYPTCGPNEFRCANGRCLSSRQWECDGENDCHDHSDEAPKNPHCTSPEHKCNASSQFLCSSGRCVAEALLCNGQDDCGDGSDERGCHVNECLSRKLSGCSQDCEDLKIGFKCRCRPGFRLKDDGRTCADLDECSTTFPCSQLCINTHGSYKCLCVEGYAPRGGDPHSCKAVTDEEPFLIFANRYYLRKLNLDGSNYTLLKQGLNNAVALDFDYREQMIYWTDVTTQGSMIRRMHLNGSNVQVLHRTGLSNPDGLAVDWVGGNLYWCDKGRDTIEVSKLNGAYRTVLVSSGLREPRALVVDVQNGYLYWTDWGDHSLIGRIGMDGSGRSIIVDTKITWPNGLTVDYVTERIYWADAREDYIEFASLDGSNRHVVLSQDIPHIFALTLFEDYVYWTDWETKSINRAHKTTGANKTLLISTLHRPMDLHVFHALRQPDVPNHPCKVNNGGCSNLCLLSPGGGHKCACPTNFYLGGDGRTCVSNCTASQFVCKNDKCIPFWWKCDTEDDCGDHSDEPPDCPEFKCRPGQFQCSTGICTNPAFICDGDNDCQDNSDEANCDIHVCLPSQFKCTNTNRCIPGIFRCNGQDNCGDGEDERDCPEVTCAPNQFQCSITKRCIPRVWVCDRDNDCVDGSDEPANCTQMTCGVDEFRCKDSGRCIPARWKCDGEDDCGDGSDEPKEECDERTCEPYQFRCKNNRCVPGRWQCDYDNDCGDNSDEESCTPRPCSESEFSCANGRCIAGRWKCDGDHDCADGSDEKDCTPRCDMDQFQCKSGHCIPLRWRCDADADCMDGSDEEACGTGVRTCPLDEFQCNNTLCKPLAWKCDGEDDCGDNSDENPEECARFICPPNRPFRCKNDRVCLWIGRQCDGVDNCGDGTDEEDCEPPTAQNPHCKDKKEFLCRNQRCLSSSLRCNMFDDCGDGSDEEDCSIDPKLTSCATNASMCGDEARCVRTEKAAYCACRSGFHTVPGQPGCQDINECLRFGTCSQLCNNTKGGHLCSCARNFMKTHNTCKAEGSEYQVLYIADDNEIRSLFPGHPHSAYEQTFQGDESVRIDAMDVHVKAGRVYWTNWHTGTISYRSLPPAAPPTTSNRHRRQIDRGVTHLNISGLKMPRGIAIDWVAGNVYWTDSGRDVIEVAQMKGENRKTLISGMIDEPHAIVVDPLRGTMYWSDWGNHPKIETAAMDGTLRETLVQDNIQWPTGLAVDYHNERLYWADAKLSVIGSIRLNGTDPIVAADSKRGLSHPFSIDVFEDYIYGVTYINNRVFKIHKFGHSPLINLTGGLSHASDVVLYHQHKQPEVTNPCDRKKCEWLCLLSPSGPVCTCPNGKRLDNGTCVPVPSPTPPPDAPRPGTCTLQCFNGGSCFLNARRQPKCRCQPRYTGDKCELDQCWEYCHNGGTCAASPSGMPTCRCPTGFTGPKCTAQVCAGYCSNNSTCTVNQGNQPQCRCLPGFLGDRCQYRQCSGFCENFGTCQMAADGSRQCRCTVYFEGPRCEVNKCSRCLQGACVVNKQTGDVTCNCTDGRVAPSCLTCIDHCSNGGSCTMNSKMMPECQCPPHMTGPRCEEQVVSQQQPGHMASILIPLLLLLLLLLVAGVVFWYKRRVRGAKGFQHQRMTNGAMNVEIGNPTYKMYEGGEPDDVGGLLDADFALDPDKPTNFTNPVYATLYMGGHGSRHSLASTDEKRELLGRGPEDEIGDPLA.

The N-terminal stretch at methionine 1–glycine 19 is a signal peptide. The Extracellular segment spans residues alanine 20 to serine 4424. LDL-receptor class A domains are found at residues lysine 26–glutamine 67 and glutamine 71–glutamate 111. 6 disulfide bridges follow: cysteine 28–cysteine 41, cysteine 35–cysteine 54, cysteine 48–cysteine 65, cysteine 73–cysteine 86, cysteine 80–cysteine 99, and cysteine 93–cysteine 109. Residues leucine 112–lysine 150 enclose the EGF-like 1 domain. Residue asparagine 115 is glycosylated (N-linked (GlcNAc...) asparagine). 6 disulfide bridges follow: cysteine 116–cysteine 125, cysteine 121–cysteine 134, cysteine 136–cysteine 149, cysteine 155–cysteine 165, cysteine 161–cysteine 174, and cysteine 176–cysteine 189. Asparagine 137 is a glycosylation site (N-linked (GlcNAc...) asparagine). The region spanning aspartate 151–lysine 190 is the EGF-like 2; calcium-binding domain. Asparagine 186, asparagine 240, and asparagine 275 each carry an N-linked (GlcNAc...) asparagine glycan. 3 LDL-receptor class B repeats span residues glycine 293–methionine 335, glycine 336–serine 379, and arginine 380–tyrosine 423. An N-linked (GlcNAc...) asparagine glycan is attached at asparagine 358. The N-linked (GlcNAc...) asparagine glycan is linked to asparagine 447. Residues arginine 475–lysine 521 form the EGF-like 3 domain. 3 disulfide bridges follow: cysteine 479–cysteine 494, cysteine 490–cysteine 505, and cysteine 507–cysteine 520. LDL-receptor class B repeat units lie at residues glycine 572–glycine 614, aspartate 615–asparagine 660, glycine 661–alanine 711, and glycine 712–tyrosine 755. Asparagine 730 carries an N-linked (GlcNAc...) asparagine glycan. The EGF-like 4 domain occupies glycine 804 to leucine 844. 33 cysteine pairs are disulfide-bonded: cysteine 808–cysteine 819, cysteine 815–cysteine 828, cysteine 830–cysteine 843, cysteine 855–cysteine 867, cysteine 862–cysteine 880, cysteine 874–cysteine 891, cysteine 896–cysteine 908, cysteine 903–cysteine 921, cysteine 915–cysteine 932, cysteine 937–cysteine 949, cysteine 944–cysteine 962, cysteine 956–cysteine 972, cysteine 977–cysteine 990, cysteine 985–cysteine 1003, cysteine 997–cysteine 1012, cysteine 1016–cysteine 1028, cysteine 1023–cysteine 1041, cysteine 1035–cysteine 1052, cysteine 1063–cysteine 1076, cysteine 1070–cysteine 1089, cysteine 1083–cysteine 1098, cysteine 1105–cysteine 1119, cysteine 1113–cysteine 1132, cysteine 1126–cysteine 1141, cysteine 1146–cysteine 1160, cysteine 1153–cysteine 1173, cysteine 1167–cysteine 1183, cysteine 1186–cysteine 1197, cysteine 1193–cysteine 1207, cysteine 1209–cysteine 1222, cysteine 1228–cysteine 1238, cysteine 1234–cysteine 1247, and cysteine 1249–cysteine 1262. 8 consecutive LDL-receptor class A domains span residues proline 853 to glutamine 893, histidine 894 to alanine 934, arginine 935 to tyrosine 974, proline 975 to histidine 1014, histidine 1014 to asparagine 1054, glycine 1061 to glycine 1100, histidine 1103 to alanine 1143, and leucine 1144 to cysteine 1183. Ca(2+)-binding residues include tryptophan 872, aspartate 875, aspartate 877, aspartate 879, aspartate 885, and glutamate 886. An N-linked (GlcNAc...) asparagine glycan is attached at asparagine 929. Tryptophan 1033, aspartate 1036, aspartate 1038, aspartate 1040, aspartate 1046, and glutamate 1047 together coordinate Ca(2+). Asparagine 1051 carries N-linked (GlcNAc...) asparagine glycosylation. Positions 1081, 1084, 1086, 1088, 1094, and 1095 each coordinate Ca(2+). 2 N-linked (GlcNAc...) asparagine glycosylation sites follow: asparagine 1155 and asparagine 1156. EGF-like domains are found at residues aspartate 1184–glutamine 1223 and isoleucine 1224–arginine 1263. Asparagine 1196 and asparagine 1219 each carry an N-linked (GlcNAc...) asparagine glycan. LDL-receptor class B repeat units lie at residues serine 1310–alanine 1356, glycine 1357–aspartate 1399, glycine 1400–glutamate 1446, lysine 1447–glutamate 1491, and valine 1492–serine 1532. A glycan (N-linked (GlcNAc...) asparagine) is linked at asparagine 1512. In terms of domain architecture, EGF-like 7 spans alanine 1537–tyrosine 1580. 3 cysteine pairs are disulfide-bonded: cysteine 1541–cysteine 1554, cysteine 1550–cysteine 1564, and cysteine 1566–cysteine 1579. N-linked (GlcNAc...) asparagine glycosylation is found at asparagine 1559, asparagine 1576, asparagine 1617, and asparagine 1646. 4 LDL-receptor class B repeats span residues glutamine 1628–serine 1670, arginine 1671–arginine 1714, glycine 1715–glutamate 1754, and serine 1755–lysine 1799. Asparagine 1724, asparagine 1734, asparagine 1764, and asparagine 1826 each carry an N-linked (GlcNAc...) asparagine glycan. In terms of domain architecture, EGF-like 8 spans glycine 1847–glutamate 1888. Cystine bridges form between cysteine 1851-cysteine 1862, cysteine 1858-cysteine 1872, and cysteine 1874-cysteine 1887. Asparagine 1934 carries an N-linked (GlcNAc...) asparagine glycan. LDL-receptor class B repeat units lie at residues aspartate 1935–alanine 1977, glycine 1978–lysine 2020, glycine 2021–glycine 2064, and glycine 2065–phenylalanine 2108. A glycan (N-linked (GlcNAc...) asparagine) is linked at asparagine 1996. Lysine 2010 is modified (N6-acetyllysine). Residue asparagine 2049 is glycosylated (N-linked (GlcNAc...) asparagine). N-linked (GlcNAc...) asparagine glycans are attached at residues asparagine 2118 and asparagine 2128. The EGF-like 9 domain occupies glycine 2156–arginine 2196. 3 disulfide bridges follow: cysteine 2160/cysteine 2171, cysteine 2167/cysteine 2181, and cysteine 2183/cysteine 2195. 5 LDL-receptor class B repeats span residues asparagine 2254 to tryptophan 2295, aspartate 2296 to glutamine 2344, asparagine 2345 to alanine 2389, glutamate 2390 to histidine 2432, and isoleucine 2433 to aspartate 2474. Asparagine 2473 carries an N-linked (GlcNAc...) asparagine glycan. An EGF-like 10 domain is found at glutamate 2479–arginine 2519. Cystine bridges form between cysteine 2483–cysteine 2494, cysteine 2490–cysteine 2504, and cysteine 2506–cysteine 2518. The N-linked (GlcNAc...) asparagine glycan is linked to asparagine 2503. The N-linked (GlcNAc...) asparagine glycan is linked to asparagine 2522. LDL-receptor class A domains follow at residues serine 2523 to serine 2564, arginine 2565 to lysine 2603, threonine 2604 to alanine 2642, threonine 2643 to glycine 2691, proline 2695 to lysine 2733, lysine 2733 to glycine 2772, and lysine 2773 to tyrosine 2815. 6 disulfide bridges follow: cysteine 2525–cysteine 2538, cysteine 2533–cysteine 2551, cysteine 2545–cysteine 2562, cysteine 2567–cysteine 2579, cysteine 2574–cysteine 2592, and cysteine 2586–cysteine 2601. Asparagine 2602 carries an N-linked (GlcNAc...) asparagine glycan. Disulfide bonds link cysteine 2606–cysteine 2618, cysteine 2613–cysteine 2631, cysteine 2625–cysteine 2640, cysteine 2645–cysteine 2667, cysteine 2661–cysteine 2680, cysteine 2674–cysteine 2689, cysteine 2697–cysteine 2709, cysteine 2704–cysteine 2722, cysteine 2716–cysteine 2731, cysteine 2735–cysteine 2747, cysteine 2742–cysteine 2760, cysteine 2754–cysteine 2770, cysteine 2775–cysteine 2788, cysteine 2782–cysteine 2801, and cysteine 2795–cysteine 2813. 2 N-linked (GlcNAc...) asparagine glycosylation sites follow: asparagine 2621 and asparagine 2639. Asparagine 2816 is a glycosylation site (N-linked (GlcNAc...) asparagine). 3 LDL-receptor class A domains span residues serine 2817 to tyrosine 2856, proline 2857 to serine 2900, and histidine 2903 to histidine 2941. Disulfide bonds link cysteine 2819–cysteine 2831, cysteine 2826–cysteine 2844, cysteine 2838–cysteine 2854, cysteine 2859–cysteine 2871, cysteine 2866–cysteine 2885, cysteine 2879–cysteine 2898, cysteine 2905–cysteine 2918, cysteine 2913–cysteine 2931, cysteine 2925–cysteine 2940, cysteine 2945–cysteine 2957, cysteine 2953–cysteine 2966, cysteine 2968–cysteine 2981, cysteine 2987–cysteine 2997, cysteine 2993–cysteine 3006, and cysteine 3008–cysteine 3022. N-linked (GlcNAc...) asparagine glycosylation is present at asparagine 2906. The region spanning valine 2942 to alanine 2982 is the EGF-like 11 domain. Residues aspartate 2983–lysine 3023 form the EGF-like 12; calcium-binding domain. N-linked (GlcNAc...) asparagine glycans are attached at residues asparagine 3049 and asparagine 3090. 5 LDL-receptor class B repeats span residues glutamine 3070–glycine 3114, glycine 3115–asparagine 3157, glycine 3158–threonine 3201, glutamate 3202–tyrosine 3244, and valine 3245–leucine 3285. Asparagine 3265 carries an N-linked (GlcNAc...) asparagine glycan. In terms of domain architecture, EGF-like 13 spans proline 3291–valine 3332. Cystine bridges form between cysteine 3295-cysteine 3306, cysteine 3302-cysteine 3316, and cysteine 3318-cysteine 3331. LDL-receptor class A domains are found at residues serine 3333–glutamate 3372, phenylalanine 3373–isoleucine 3411, histidine 3412–glutamate 3451, valine 3452–glutamine 3492, methionine 3493–glutamate 3534, arginine 3535–proline 3573, arginine 3574–proline 3612, proline 3612–threonine 3650, arginine 3653–arginine 3693, phenylalanine 3694–proline 3734, and proline 3740–isoleucine 3779. Residue asparagine 3334 is glycosylated (N-linked (GlcNAc...) asparagine). 39 cysteine pairs are disulfide-bonded: cysteine 3335–cysteine 3347, cysteine 3342–cysteine 3360, cysteine 3354–cysteine 3370, cysteine 3375–cysteine 3387, cysteine 3382–cysteine 3400, cysteine 3394–cysteine 3409, cysteine 3414–cysteine 3427, cysteine 3421–cysteine 3440, cysteine 3434–cysteine 3449, cysteine 3454–cysteine 3467, cysteine 3461–cysteine 3480, cysteine 3474–cysteine 3490, cysteine 3495–cysteine 3508, cysteine 3502–cysteine 3521, cysteine 3515–cysteine 3532, cysteine 3537–cysteine 3549, cysteine 3544–cysteine 3562, cysteine 3556–cysteine 3571, cysteine 3576–cysteine 3588, cysteine 3583–cysteine 3601, cysteine 3595–cysteine 3610, cysteine 3614–cysteine 3626, cysteine 3621–cysteine 3639, cysteine 3633–cysteine 3648, cysteine 3655–cysteine 3667, cysteine 3662–cysteine 3680, cysteine 3674–cysteine 3691, cysteine 3696–cysteine 3710, cysteine 3704–cysteine 3723, cysteine 3717–cysteine 3732, cysteine 3742–cysteine 3755, cysteine 3750–cysteine 3768, cysteine 3762–cysteine 3777, cysteine 3786–cysteine 3799, cysteine 3793–cysteine 3808, cysteine 3810–cysteine 3823, cysteine 3829–cysteine 3839, cysteine 3835–cysteine 3848, and cysteine 3850–cysteine 3861. A glycan (N-linked (GlcNAc...) asparagine) is linked at asparagine 3489. N-linked (GlcNAc...) asparagine glycosylation is present at asparagine 3663. EGF-like domains follow at residues lysine 3782 to glutamine 3824 and aspartate 3825 to lysine 3862. Residue asparagine 3789 is glycosylated (N-linked (GlcNAc...) asparagine). N-linked (GlcNAc...) asparagine glycosylation occurs at asparagine 3840. LDL-receptor class B repeat units lie at residues glycine 3913–isoleucine 3955, glycine 3971–arginine 4013, glycine 4014–asparagine 4057, and glutamate 4058–tyrosine 4102. Residues arginine 3941 to arginine 3944 carry the Recognition site for proteolytical processing motif. An N-linked (GlcNAc...) asparagine glycan is attached at asparagine 3954. N-linked (GlcNAc...) asparagine glycans are attached at residues asparagine 4076 and asparagine 4126. 7 consecutive EGF-like domains span residues valine 4148–valine 4184, arginine 4197–glutamate 4233, glutamate 4233–threonine 4269, threonine 4269–glutamine 4305, glutamine 4305–glutamate 4341, glutamate 4341–leucine 4376, and serine 4374–glutamate 4410. 17 disulfides stabilise this stretch: cysteine 4152/cysteine 4161, cysteine 4157/cysteine 4170, cysteine 4172/cysteine 4183, cysteine 4201/cysteine 4211, cysteine 4205/cysteine 4221, cysteine 4223/cysteine 4232, cysteine 4237/cysteine 4247, cysteine 4241/cysteine 4257, cysteine 4259/cysteine 4268, cysteine 4273/cysteine 4283, cysteine 4277/cysteine 4293, cysteine 4295/cysteine 4304, cysteine 4309/cysteine 4319, cysteine 4313/cysteine 4329, cysteine 4331/cysteine 4340, cysteine 4345/cysteine 4353, and cysteine 4348/cysteine 4364. Asparagine 4180 is a glycosylation site (N-linked (GlcNAc...) asparagine). 2 N-linked (GlcNAc...) asparagine glycosylation sites follow: asparagine 4279 and asparagine 4280. The N-linked (GlcNAc...) asparagine glycan is linked to asparagine 4365. 4 disulfides stabilise this stretch: cysteine 4366/cysteine 4375, cysteine 4378/cysteine 4388, cysteine 4382/cysteine 4398, and cysteine 4400/cysteine 4409. Residues isoleucine 4425 to tyrosine 4445 traverse the membrane as a helical segment. The Cytoplasmic segment spans residues lysine 4446–alanine 4545. Positions lysine 4446–alanine 4545 are interaction with MAFB. Threonine 4461 is modified (phosphothreonine). The short motif at phenylalanine 4503–tyrosine 4508 is the NPXY motif element. Phosphotyrosine is present on tyrosine 4508. Phosphoserine occurs at positions 4518, 4521, and 4524.

It belongs to the LDLR family. In terms of assembly, heterodimer of an 85-kDa membrane-bound carboxyl subunit and a non-covalently attached 515-kDa N-terminal subunit. Intracellular domain interacts with MAFB. Found in a complex with PID1/PCLI1, LRP1 and CUBNI. Interacts with SNX17, PID1/PCLI1, PDGF and CUBN. The intracellular domain interacts with SHC1, GULP1 and DAB1. Can weakly interact (via NPXY motif) with DAB2 (via PID domain); the interaction is enhanced by tyrosine phosphorylation of the NPXY motif. Interacts with MDK; promotes neuronal survival. Interacts with LRPAP1; this interaction is followed by rapid internalization. Interacts with uPA/PLAU and PAI1/SERPINE1, either individually or in complex with each other, leading to rapid endocytosis; this interaction is abolished in the presence of LRPAP1/RAP. Also interacts with tPA/PLAT alone or in complex with SERPINE1. Interacts with the urokinase receptor PLAUR; this interaction leads to PLAUR internalization and is impaired in the presence of SORL1. Interacts with PDGFB. Interacts with TAU/MAPT, leading to endocytosis; this interaction is reduced in the presence of LRPAP1/RAP. Interacts with IGFBP3. Interacts with ADGRG6. Post-translationally, phosphorylated on serine and threonine residues. In terms of processing, phosphorylated on tyrosine residues upon stimulation with PDGF. Tyrosine phosphorylation promotes interaction with SHC1. Cleaved into a 85 kDa membrane-spanning subunit (LRP-85) and a 515 kDa large extracellular domain (LRP-515) that remains non-covalently associated. Gamma-secretase-dependent cleavage of LRP-85 releases the intracellular domain from the membrane.

Its subcellular location is the cell membrane. It is found in the membrane. The protein localises to the coated pit. It localises to the golgi outpost. The protein resides in the cytoplasm. Its subcellular location is the cytoskeleton. It is found in the microtubule organizing center. The protein localises to the nucleus. Its function is as follows. Endocytic receptor involved in endocytosis and in phagocytosis of apoptotic cells. Required for early embryonic development. Involved in cellular lipid homeostasis. Involved in the plasma clearance of chylomicron remnants and activated LRPAP1 (alpha 2-macroglobulin), as well as the local metabolism of complexes between plasminogen activators and their endogenous inhibitors. Acts as an alpha-2-macroglobulin receptor. Acts as a TAU/MAPT receptor and controls the endocytosis of TAU/MAPT as well as its subsequent spread. May modulate cellular events, such as APP metabolism, kinase-dependent intracellular signaling, neuronal calcium signaling as well as neurotransmission. Also acts as a receptor for IGFBP3 to mediate cell growth inhibition. (Microbial infection) Functions as a receptor for Vibrio cholerae cholix toxin and for Pseudomonas aeruginosa exotoxin A. This chain is Prolow-density lipoprotein receptor-related protein 1, found in Mus musculus (Mouse).